The primary structure comprises 219 residues: UPF0376 protein C36C5.12 (219 aa).

Residues 1–20 (MGRLDVKNSWIEFHQDEMTS) lie on the Cytoplasmic side of the membrane. The chain crosses the membrane as a helical; Signal-anchor for type II membrane protein span at residues 21–43 (FLKLAIIGTVLLGVAHGANLTAA). Over 44 to 219 (EKETYCELRS…VSKCDFSRLG (176 aa)) the chain is Extracellular. Residues Asn-104 and Asn-204 are each glycosylated (N-linked (GlcNAc...) asparagine).

Belongs to the UPF0376 family.

It is found in the membrane. In Caenorhabditis elegans, this protein is UPF0376 protein C36C5.12.